Consider the following 599-residue polypeptide: Beta-(1--&gt;2)glucan export ATP-binding/permease protein NdvA (599 aa).

In terms of domain architecture, ABC transmembrane type-1 spans 21–301 (TITMCVASVL…ISAFINQTVT (281 aa)). Helical transmembrane passes span 22–42 (ITMC…PVLF), 55–75 (IFSP…AAVF), 156–176 (MRMS…GQLV), 248–268 (MAST…VTKG), and 276–296 (IAFI…SAFI). Positions 335-569 (IVFDNVTYEF…GGRFSDLLRA (235 aa)) constitute an ABC transporter domain. 368 to 375 (GPTGAGKT) lines the ATP pocket.

Belongs to the ABC transporter superfamily. Beta-(1--&gt;2)glucan exporter (TC 3.A.1.108.1) family. Homodimer.

It localises to the cell inner membrane. The catalysed reaction is [(1-&gt;2)-beta-D-glucosyl](n)(in) + ATP + H2O = [(1-&gt;2)-beta-D-glucosyl](n)(out) + ADP + phosphate + H(+). Its function is as follows. Involved in beta-(1--&gt;2)glucan export. Its export to the periplasmic space is required to exert its action as a virulence factor. Transmembrane domains (TMD) form a pore in the inner membrane and the ATP-binding domain (NBD) is responsible for energy generation. The chain is Beta-(1--&gt;2)glucan export ATP-binding/permease protein NdvA from Brucella abortus (strain 2308).